A 202-amino-acid polypeptide reads, in one-letter code: Dephospho-CoA kinase (202 aa).

The region spanning 6–202 (KVSITGDLSS…EYFYALKGAL (197 aa)) is the DPCK domain. 14-19 (SSGKTE) provides a ligand contact to ATP.

The protein belongs to the CoaE family.

The protein resides in the cytoplasm. It carries out the reaction 3'-dephospho-CoA + ATP = ADP + CoA + H(+). The protein operates within cofactor biosynthesis; coenzyme A biosynthesis; CoA from (R)-pantothenate: step 5/5. Functionally, catalyzes the phosphorylation of the 3'-hydroxyl group of dephosphocoenzyme A to form coenzyme A. The protein is Dephospho-CoA kinase of Chlamydia abortus (strain DSM 27085 / S26/3) (Chlamydophila abortus).